We begin with the raw amino-acid sequence, 293 residues long: Undecaprenyl-diphosphatase (293 aa).

7 helical membrane-spanning segments follow: residues 57 to 77 (PGVSATAVIQLGSILAVIVYF), 106 to 126 (LAIAIGTMPILLAGMAIKLFW), 134 to 154 (IRSLPSIAVVSIVMALLLALA), 172 to 192 (GFVVGLAQALALIPGVSRSGS), 212 to 232 (FLLGIPAITLAGLVELKDAFA), 239 to 259 (VLPLLVGIVSAAFVSWLAIDW), and 268 to 288 (STWIFVAYRLLFGVLVLAWWL).

Belongs to the UppP family.

It is found in the cell inner membrane. The catalysed reaction is di-trans,octa-cis-undecaprenyl diphosphate + H2O = di-trans,octa-cis-undecaprenyl phosphate + phosphate + H(+). Functionally, catalyzes the dephosphorylation of undecaprenyl diphosphate (UPP). Confers resistance to bacitracin. The chain is Undecaprenyl-diphosphatase from Prochlorococcus marinus (strain MIT 9303).